Consider the following 358-residue polypeptide: Uroporphyrinogen decarboxylase (358 aa).

Residues 29–33, aspartate 79, tyrosine 156, threonine 211, and histidine 329 contribute to the substrate site; that span reads RQAGR.

It belongs to the uroporphyrinogen decarboxylase family. In terms of assembly, homodimer.

The protein localises to the cytoplasm. The catalysed reaction is uroporphyrinogen III + 4 H(+) = coproporphyrinogen III + 4 CO2. It functions in the pathway porphyrin-containing compound metabolism; protoporphyrin-IX biosynthesis; coproporphyrinogen-III from 5-aminolevulinate: step 4/4. In terms of biological role, catalyzes the decarboxylation of four acetate groups of uroporphyrinogen-III to yield coproporphyrinogen-III. The sequence is that of Uroporphyrinogen decarboxylase from Idiomarina loihiensis (strain ATCC BAA-735 / DSM 15497 / L2-TR).